Here is a 101-residue protein sequence, read N- to C-terminus: Small ribosomal subunit protein bS18c (101 aa).

It belongs to the bacterial ribosomal protein bS18 family. Part of the 30S ribosomal subunit.

The protein resides in the plastid. The protein localises to the chloroplast. The polypeptide is Small ribosomal subunit protein bS18c (Guizotia abyssinica (Niger)).